Here is a 386-residue protein sequence, read N- to C-terminus: MGILGLSKLIADLAPQAIRESEMKHFFGRKVAIDASMCLYQFLIAVRSEGAQLATVNGDPTSHLMGMFYRTIRLLDNGIKPVYVFDGKPPDLKSGELAKRAERREEAEKALKAATDAGDDAEIEKFNRRLVRVTKEHAREAKELLSLMGVPYVDAPCEAEAQCAALVKAGKVYATATEDMDALTFGSTKLLRYLTYSEARKMPVKEFSYDKLLEGLEVNNREFIDLCILLGCDYCESIKGIGPKRAIELINNYRDIETILDNLDTSKYTVPENWNYKVARELFIEPEVADASAIDLKWTEPDEEGLVKFLCGDRQFSEERVRNGAKKLFKSKHAQTQVRLDSFFKTLPSTPNAVNAAKRKAEEAKKSANNKKAKTSGGAARGRRPK.

The interval 1–104 (MGILGLSKLI…GELAKRAERR (104 aa)) is N-domain. Asp-34 is a Mg(2+) binding site. Residues Arg-47 and Arg-70 each coordinate DNA. Residues Asp-86, Glu-158, Glu-160, Asp-179, and Asp-181 each contribute to the Mg(2+) site. The interval 122–253 (EIEKFNRRLV…KRAIELINNY (132 aa)) is I-domain. Glu-158 lines the DNA pocket. The DNA site is built by Gly-231 and Asp-233. A Mg(2+)-binding site is contributed by Asp-233. The tract at residues 336–344 (TQVRLDSFF) is interaction with PCNA. Positions 354–386 (VNAAKRKAEEAKKSANNKKAKTSGGAARGRRPK) are disordered.

Belongs to the XPG/RAD2 endonuclease family. FEN1 subfamily. As to quaternary structure, interacts with PCNA. Three molecules of FEN1 bind to one PCNA trimer with each molecule binding to one PCNA monomer. PCNA stimulates the nuclease activity without altering cleavage specificity. Mg(2+) serves as cofactor. In terms of processing, phosphorylated. Phosphorylation upon DNA damage induces relocalization to the nuclear plasma.

The protein localises to the nucleus. The protein resides in the nucleolus. It localises to the nucleoplasm. It is found in the mitochondrion. In terms of biological role, structure-specific nuclease with 5'-flap endonuclease and 5'-3' exonuclease activities involved in DNA replication and repair. During DNA replication, cleaves the 5'-overhanging flap structure that is generated by displacement synthesis when DNA polymerase encounters the 5'-end of a downstream Okazaki fragment. It enters the flap from the 5'-end and then tracks to cleave the flap base, leaving a nick for ligation. Also involved in the long patch base excision repair (LP-BER) pathway, by cleaving within the apurinic/apyrimidinic (AP) site-terminated flap. Acts as a genome stabilization factor that prevents flaps from equilibrating into structures that lead to duplications and deletions. Also possesses 5'-3' exonuclease activity on nicked or gapped double-stranded DNA, and exhibits RNase H activity. Also involved in replication and repair of rDNA and in repairing mitochondrial DNA. The protein is Flap endonuclease 1 of Drosophila pseudoobscura pseudoobscura (Fruit fly).